We begin with the raw amino-acid sequence, 66 residues long: Large ribosomal subunit protein bL31 (66 aa).

4 residues coordinate Zn(2+): cysteine 16, cysteine 18, cysteine 36, and cysteine 39.

It belongs to the bacterial ribosomal protein bL31 family. Type A subfamily. As to quaternary structure, part of the 50S ribosomal subunit. Zn(2+) is required as a cofactor.

Binds the 23S rRNA. The protein is Large ribosomal subunit protein bL31 of Nitratiruptor sp. (strain SB155-2).